A 417-amino-acid polypeptide reads, in one-letter code: UDP-N-acetylglucosamine 1-carboxyvinyltransferase (417 aa).

22–23 contributes to the phosphoenolpyruvate binding site; that stretch reads KN. R91 contacts UDP-N-acetyl-alpha-D-glucosamine. C115 functions as the Proton donor in the catalytic mechanism. C115 is subject to 2-(S-cysteinyl)pyruvic acid O-phosphothioketal. Residues 120-124, D304, and I326 each bind UDP-N-acetyl-alpha-D-glucosamine; that span reads RPVDL.

It belongs to the EPSP synthase family. MurA subfamily.

It localises to the cytoplasm. It carries out the reaction phosphoenolpyruvate + UDP-N-acetyl-alpha-D-glucosamine = UDP-N-acetyl-3-O-(1-carboxyvinyl)-alpha-D-glucosamine + phosphate. It participates in cell wall biogenesis; peptidoglycan biosynthesis. Functionally, cell wall formation. Adds enolpyruvyl to UDP-N-acetylglucosamine. This is UDP-N-acetylglucosamine 1-carboxyvinyltransferase from Nitratidesulfovibrio vulgaris (strain ATCC 29579 / DSM 644 / CCUG 34227 / NCIMB 8303 / VKM B-1760 / Hildenborough) (Desulfovibrio vulgaris).